The chain runs to 307 residues: tRNA dimethylallyltransferase (307 aa).

9–16 (GPTAIGKT) lines the ATP pocket. 11-16 (TAIGKT) contacts substrate. 2 interaction with substrate tRNA regions span residues 34–37 (DSRQ) and 164–168 (QRMMR).

This sequence belongs to the IPP transferase family. As to quaternary structure, monomer. Mg(2+) is required as a cofactor.

It catalyses the reaction adenosine(37) in tRNA + dimethylallyl diphosphate = N(6)-dimethylallyladenosine(37) in tRNA + diphosphate. In terms of biological role, catalyzes the transfer of a dimethylallyl group onto the adenine at position 37 in tRNAs that read codons beginning with uridine, leading to the formation of N6-(dimethylallyl)adenosine (i(6)A). This is tRNA dimethylallyltransferase from Flavobacterium psychrophilum (strain ATCC 49511 / DSM 21280 / CIP 103535 / JIP02/86).